A 1031-amino-acid polypeptide reads, in one-letter code: uncharacterized protein (1031 aa).

Residues 50 to 85 (FKVQINLKTAAAHLDCSCSNDKQNCVHIIAALLKYN) form an SWIM-type zinc finger. The Helicase ATP-binding domain maps to 590–751 (RALEDNQFGG…WSCFDFVLPN (162 aa)). 603 to 610 (DEMGLGKT) provides a ligand contact to ATP. Positions 702–705 (DEAQ) match the DEAQ box motif. The Helicase C-terminal domain maps to 868–1022 (ALNIIYEALE…EDVNFFKSLS (155 aa)).

It belongs to the SNF2/RAD54 helicase family.

This is an uncharacterized protein from Mycoplasma genitalium (strain ATCC 33530 / DSM 19775 / NCTC 10195 / G37) (Mycoplasmoides genitalium).